The chain runs to 435 residues: NADH-quinone oxidoreductase subunit D (435 aa).

The protein belongs to the complex I 49 kDa subunit family. In terms of assembly, NDH-1 is composed of 14 different subunits. Subunits NuoB, C, D, E, F, and G constitute the peripheral sector of the complex.

The protein resides in the cell inner membrane. It catalyses the reaction a quinone + NADH + 5 H(+)(in) = a quinol + NAD(+) + 4 H(+)(out). Functionally, NDH-1 shuttles electrons from NADH, via FMN and iron-sulfur (Fe-S) centers, to quinones in the respiratory chain. The immediate electron acceptor for the enzyme in this species is believed to be ubiquinone. Couples the redox reaction to proton translocation (for every two electrons transferred, four hydrogen ions are translocated across the cytoplasmic membrane), and thus conserves the redox energy in a proton gradient. The sequence is that of NADH-quinone oxidoreductase subunit D from Xanthomonas euvesicatoria pv. vesicatoria (strain 85-10) (Xanthomonas campestris pv. vesicatoria).